The primary structure comprises 478 residues: MLARHHDPIVAIATAPGRGAVGIVRVSGKDIAPVIAAICGRALAPRQATYLPFRDAQGQVIDQGLAIHFPAPHSYTGEDVLELQAHGGPVVLQLLLARCLEAGAALNPAIGQPWLAQLRVAQPGEFTERAFLNDKIDLAQAEAIADLIDASTETAARSAARSMSGEFSLAVNTLLEQLIHLRMLVEATLDFPEEDIDFLQKADAQGQLSRLQATLTGVMQRATQGAILREGIKVVIAGQPNAGKSSLLNALAGAELAIVTPIAGTTRDKVSELIQIEGVPLHVVDTAGLREALDEVEKIGVERAWAEIESADAVLFLHDLSRRDAALPAQDTINYIAADDRIARTLANKLPENTAIIDVWNKSDLTSPAGLQQVQGGVLISAKTGAGLQTLRQRLLQVVGWQAAPEGVFMARERHVRALHHVQDQLATAGRQLQAARPALDLLAEDLRQAQRQLSEITGEFTPDDLLGEIFSRFCIGK.

The (6S)-5-formyl-5,6,7,8-tetrahydrofolate site is built by R25, E82, and K135. Residues 231–400 enclose the TrmE-type G domain; the sequence is GIKVVIAGQP…LRQRLLQVVG (170 aa). N241 contacts K(+). GTP-binding positions include 241-246, 260-266, and 285-288; these read NAGKSS, TPIAGTT, and DTAG. Position 245 (S245) interacts with Mg(2+). 3 residues coordinate K(+): T260, I262, and T265. T266 contributes to the Mg(2+) binding site. K478 serves as a coordination point for (6S)-5-formyl-5,6,7,8-tetrahydrofolate.

The protein belongs to the TRAFAC class TrmE-Era-EngA-EngB-Septin-like GTPase superfamily. TrmE GTPase family. In terms of assembly, homodimer. Heterotetramer of two MnmE and two MnmG subunits. It depends on K(+) as a cofactor.

Its subcellular location is the cytoplasm. Functionally, exhibits a very high intrinsic GTPase hydrolysis rate. Involved in the addition of a carboxymethylaminomethyl (cmnm) group at the wobble position (U34) of certain tRNAs, forming tRNA-cmnm(5)s(2)U34. The chain is tRNA modification GTPase MnmE from Polaromonas sp. (strain JS666 / ATCC BAA-500).